Here is a 121-residue protein sequence, read N- to C-terminus: Small ribosomal subunit protein uS13 (121 aa).

Residues 91-121 (HRKGLPMRGQRTRTNARTRKGPRKAGVALKK) are disordered.

Belongs to the universal ribosomal protein uS13 family. As to quaternary structure, part of the 30S ribosomal subunit. Forms a loose heterodimer with protein S19. Forms two bridges to the 50S subunit in the 70S ribosome.

Functionally, located at the top of the head of the 30S subunit, it contacts several helices of the 16S rRNA. In the 70S ribosome it contacts the 23S rRNA (bridge B1a) and protein L5 of the 50S subunit (bridge B1b), connecting the 2 subunits; these bridges are implicated in subunit movement. Contacts the tRNAs in the A and P-sites. In Cupriavidus taiwanensis (strain DSM 17343 / BCRC 17206 / CCUG 44338 / CIP 107171 / LMG 19424 / R1) (Ralstonia taiwanensis (strain LMG 19424)), this protein is Small ribosomal subunit protein uS13.